We begin with the raw amino-acid sequence, 205 residues long: High frequency lysogenization protein HflD homolog (205 aa).

The protein belongs to the HflD family.

The protein resides in the cytoplasm. It is found in the cell inner membrane. This is High frequency lysogenization protein HflD homolog from Aliivibrio fischeri (strain MJ11) (Vibrio fischeri).